We begin with the raw amino-acid sequence, 200 residues long: Recombination protein RecR (200 aa).

The C4-type zinc finger occupies 57-72 (CRLCRTLTEEELCPQC). Positions 80–175 (TLLCVVEGPT…VASRIAHGVP (96 aa)) constitute a Toprim domain.

The protein belongs to the RecR family.

In terms of biological role, may play a role in DNA repair. It seems to be involved in an RecBC-independent recombinational process of DNA repair. It may act with RecF and RecO. In Pseudomonas syringae pv. tomato (strain ATCC BAA-871 / DC3000), this protein is Recombination protein RecR.